A 663-amino-acid chain; its full sequence is UvrABC system protein B (663 aa).

In terms of domain architecture, Helicase ATP-binding spans 26–414 (DGLESGLAKQ…DNVAEQVVRP (389 aa)). ATP is bound at residue 39-46 (GVTGSGKT). A Beta-hairpin motif is present at residues 92–115 (YYDYYQPEAYVPASDTFIEKDASI). The Helicase C-terminal domain occupies 430–596 (QVDDLMSEIR…GINKSVEDIL (167 aa)). The UVR domain occupies 624-659 (VKQINALEKQMYSHAQNMEFELAAKIRDEYLLLKEQ).

Belongs to the UvrB family. Forms a heterotetramer with UvrA during the search for lesions. Interacts with UvrC in an incision complex.

It localises to the cytoplasm. In terms of biological role, the UvrABC repair system catalyzes the recognition and processing of DNA lesions. A damage recognition complex composed of 2 UvrA and 2 UvrB subunits scans DNA for abnormalities. Upon binding of the UvrA(2)B(2) complex to a putative damaged site, the DNA wraps around one UvrB monomer. DNA wrap is dependent on ATP binding by UvrB and probably causes local melting of the DNA helix, facilitating insertion of UvrB beta-hairpin between the DNA strands. Then UvrB probes one DNA strand for the presence of a lesion. If a lesion is found the UvrA subunits dissociate and the UvrB-DNA preincision complex is formed. This complex is subsequently bound by UvrC and the second UvrB is released. If no lesion is found, the DNA wraps around the other UvrB subunit that will check the other stand for damage. In Legionella pneumophila subsp. pneumophila (strain Philadelphia 1 / ATCC 33152 / DSM 7513), this protein is UvrABC system protein B.